A 267-amino-acid polypeptide reads, in one-letter code: 3-methyl-2-oxobutanoate hydroxymethyltransferase (267 aa).

Positions 45 and 84 each coordinate Mg(2+). Residues 45 to 46 (DS), aspartate 84, and lysine 113 contribute to the 3-methyl-2-oxobutanoate site. A Mg(2+)-binding site is contributed by glutamate 115. The active-site Proton acceptor is the glutamate 182.

It belongs to the PanB family. Homodecamer; pentamer of dimers. Mg(2+) is required as a cofactor.

The protein localises to the cytoplasm. It carries out the reaction 3-methyl-2-oxobutanoate + (6R)-5,10-methylene-5,6,7,8-tetrahydrofolate + H2O = 2-dehydropantoate + (6S)-5,6,7,8-tetrahydrofolate. It participates in cofactor biosynthesis; coenzyme A biosynthesis. Functionally, catalyzes the reversible reaction in which hydroxymethyl group from 5,10-methylenetetrahydrofolate is transferred onto alpha-ketoisovalerate to form ketopantoate. This Sulfurisphaera tokodaii (strain DSM 16993 / JCM 10545 / NBRC 100140 / 7) (Sulfolobus tokodaii) protein is 3-methyl-2-oxobutanoate hydroxymethyltransferase.